The chain runs to 209 residues: Uracil phosphoribosyltransferase (209 aa).

5-phospho-alpha-D-ribose 1-diphosphate contacts are provided by residues arginine 79, arginine 104, and 131–139 (DPMLATGGS). Uracil is bound by residues isoleucine 194 and 199–201 (GDA). Aspartate 200 contacts 5-phospho-alpha-D-ribose 1-diphosphate.

The protein belongs to the UPRTase family. Mg(2+) serves as cofactor.

The catalysed reaction is UMP + diphosphate = 5-phospho-alpha-D-ribose 1-diphosphate + uracil. It functions in the pathway pyrimidine metabolism; UMP biosynthesis via salvage pathway; UMP from uracil: step 1/1. Its activity is regulated as follows. Allosterically activated by GTP. Its function is as follows. Catalyzes the conversion of uracil and 5-phospho-alpha-D-ribose 1-diphosphate (PRPP) to UMP and diphosphate. This Brevibacillus brevis (strain 47 / JCM 6285 / NBRC 100599) protein is Uracil phosphoribosyltransferase.